Here is a 2297-residue protein sequence, read N- to C-terminus: Xin actin-binding repeat-containing protein 1 (2297 aa).

The segment covering 1-11 (MAEVAKQKKAT) has biased composition (basic and acidic residues). Residues 1-28 (MAEVAKQKKATEAVCGDEDFPPPPPPLP) form a disordered region. Xin repeat units lie at residues 104-119 (GEVQSMRWIFENWTLD), 139-154 (GDVKGKSSLFEHSTFD), 169-184 (GDVRTATWLFETQPLD), 208-223 (GDVTGARRLFETKPLD), 248-263 (GDVKKTVKLFQADPCC), 286-301 (SDFKTARWLFETQPLD), 323-338 (GGVDKKKWMFETQPLD), 362-377 (ADVHNKLQLFENQPLS), and 396-411 (GNVGSTLWLFETQPMD). Basic and acidic residues predominate over residues 433 to 442 (GEVQDKRMQF). The tract at residues 433–461 (GEVQDKRMQFEKSTAGKTAGDSGNKVQND) is disordered. Xin repeat units lie at residues 464 to 479 (GDVKTFKSLFETLPLN), 494 to 509 (GDVKGHCSLFETTPLY), 532 to 547 (GNVQNYKWMFETRPLD), 570 to 585 (DDTRTAKWMFETQPLD), 605 to 620 (SNVKTCKWLFETKPMD), 638 to 653 (ADVKSHTWLFETQPLD), 677 to 692 (VNVKTVKHLFETEPLD), 715 to 730 (GDVSRVKEIFESKSLG), 747 to 762 (GSVHKFTWLFENQPIG), 779 to 794 (GDVGGKKFIFETLSLD), 818 to 833 (VNVKSNTMLFESQPLY), 856 to 871 (GDVRGARWMFETKPLD), 893 to 908 (GDVKSARWKFETQPLD), and 928 to 943 (KCVQQSRQLFETEQAS). A Phosphoserine modification is found at Ser-952. Xin repeat units follow at residues 959 to 974 (GDVRTSTWLFENQPID), 997 to 1012 (GDVKRCTWLFESQSLD), and 1033 to 1048 (ADVKSTTWLFETTPLD). Disordered regions lie at residues 1617–1680 (PSSH…KDQK), 1866–1900 (KENIQEQAKTSNKDELHFTSRDTSSTPNKHEVPSI), 2147–2191 (SAAR…PRRK), and 2243–2297 (ELSS…TEKH). Low complexity-rich tracts occupy residues 1618-1630 (SSHTQLSSSVSVT) and 1644-1656 (SVSSNADNSKNSS). Basic and acidic residues-rich tracts occupy residues 1876–1885 (SNKDELHFTS) and 2151–2162 (KPAESPTDKPKT). The segment covering 2166 to 2180 (QSNAGSSSSQNSSAS) has biased composition (low complexity). Residues 2259 to 2278 (GMTSPVLQRSGQSFSSNSLS) are compositionally biased toward polar residues.

It belongs to the Xin family. Expressed at intercalated disks in the heart (at protein level).

It is found in the cell junction. It localises to the adherens junction. Its subcellular location is the desmosome. Its function is as follows. Positively regulates organization of the outer plexiform layer and Muller glia cells in the retina. May protect actin filaments from depolymerization. May play a role in development of normal skeletal muscle morphology and muscle fiber type composition. The chain is Xin actin-binding repeat-containing protein 1 from Danio rerio (Zebrafish).